The sequence spans 335 residues: Histidinol-phosphate aminotransferase (335 aa).

Lysine 202 carries the post-translational modification N6-(pyridoxal phosphate)lysine.

The protein belongs to the class-II pyridoxal-phosphate-dependent aminotransferase family. Histidinol-phosphate aminotransferase subfamily. Homodimer. The cofactor is pyridoxal 5'-phosphate.

It catalyses the reaction L-histidinol phosphate + 2-oxoglutarate = 3-(imidazol-4-yl)-2-oxopropyl phosphate + L-glutamate. Its pathway is amino-acid biosynthesis; L-histidine biosynthesis; L-histidine from 5-phospho-alpha-D-ribose 1-diphosphate: step 7/9. The polypeptide is Histidinol-phosphate aminotransferase (Thermotoga maritima (strain ATCC 43589 / DSM 3109 / JCM 10099 / NBRC 100826 / MSB8)).